Consider the following 122-residue polypeptide: Large ribosomal subunit protein uL14c (122 aa).

Belongs to the universal ribosomal protein uL14 family. Part of the 50S ribosomal subunit.

It is found in the plastid. The protein resides in the chloroplast. In terms of biological role, binds to 23S rRNA. The polypeptide is Large ribosomal subunit protein uL14c (Welwitschia mirabilis (Tree tumbo)).